The following is a 259-amino-acid chain: Enkurin (259 aa).

Disordered stretches follow at residues 1–26 and 76–98; these read MVAMDPTGPSESIYNLIPSDWKEPPQ and PPKKKFEWNERRKPPVPLRTDHP. Residues 76–88 show a composition bias toward basic and acidic residues; sequence PPKKKFEWNERRK. The short motif at 86 to 92 is the SH3-binding element; the sequence is RRKPPVP. The region spanning 163-255 is the Enkurin domain; sequence KRNEEVKKAQ…VLEKHKVIYI (93 aa). An interaction with TRPC proteins region spans residues 163-258; sequence KRNEEVKKAQ…KHKVIYIANK (96 aa). Residues 179 to 190 enclose the IQ domain; the sequence is IQENLRKAAMKR.

As to quaternary structure, microtubule inner protein component of sperm flagellar doublet microtubules. Binds calmodulin via its IQ domain. Interacts with TRPC1, TRPC2, TRPC5, but not TRPC3. Interacts with CFAP45. Expressed in trachea multiciliated cells.

The protein resides in the cytoplasm. It localises to the cytoskeleton. The protein localises to the flagellum axoneme. Its subcellular location is the cilium axoneme. In terms of biological role, adapter that functions to localize a calcium-sensitive signal transduction machinery in sperm to a calcium-permeable ion channel. Microtubule inner protein (MIP) part of the dynein-decorated doublet microtubules (DMTs) in cilia axoneme, which is required for motile cilia beating. The sequence is that of Enkurin (ENKUR) from Bos taurus (Bovine).